Here is a 617-residue protein sequence, read N- to C-terminus: uncharacterized protein (617 aa).

Residues Asn-387–Pro-396 are compositionally biased toward polar residues. 2 disordered regions span residues Asn-387–Pro-419 and Tyr-443–Gln-599. Over residues Arg-404 to Arg-414 the composition is skewed to low complexity. The span at Gln-453–Gln-474 shows a compositional bias: polar residues. Basic and acidic residues-rich tracts occupy residues Gln-490 to Ile-499 and Gln-522 to Ile-531. A compositionally biased stretch (polar residues) spans Arg-549 to Gln-570. Over residues Gln-572–Arg-585 the composition is skewed to basic and acidic residues. Positions Leu-586–Gln-599 are enriched in polar residues.

This is an uncharacterized protein from Escherichia coli (strain K12).